We begin with the raw amino-acid sequence, 392 residues long: Extracellular metalloproteinase 4 (392 aa).

A propeptide spanning residues 1-9 is cleaved from the precursor; the sequence is VHSVVDYVS. Asn176 is a glycosylation site (N-linked (GlcNAc...) asparagine). His193 is a Zn(2+) binding site. Glu194 is a catalytic residue. His197 serves as a coordination point for Zn(2+). N-linked (GlcNAc...) asparagine glycosylation is found at Asn359 and Asn385.

The protein belongs to the peptidase M36 family. It depends on Zn(2+) as a cofactor.

The protein localises to the secreted. Its function is as follows. Secreted metalloproteinase probably acting as a virulence factor. This Trichophyton soudanense protein is Extracellular metalloproteinase 4 (MEP4).